The primary structure comprises 338 residues: H(2)-forming methylenetetrahydromethanopterin dehydrogenase-related protein MJ0715 (338 aa).

This sequence belongs to the HMD family.

In Methanocaldococcus jannaschii (strain ATCC 43067 / DSM 2661 / JAL-1 / JCM 10045 / NBRC 100440) (Methanococcus jannaschii), this protein is H(2)-forming methylenetetrahydromethanopterin dehydrogenase-related protein MJ0715.